Here is a 30-residue protein sequence, read N- to C-terminus: ATP-dependent Clp protease ATP-binding subunit ClpA homolog (30 aa).

It belongs to the ClpA/ClpB family.

It is found in the plastid. The protein resides in the chloroplast. In terms of biological role, may interact with a ClpP-like protease involved in degradation of denatured proteins in the chloroplast. The sequence is that of ATP-dependent Clp protease ATP-binding subunit ClpA homolog from Pinus pinaster (Maritime pine).